Here is a 122-residue protein sequence, read N- to C-terminus: Large ribosomal subunit protein uL14 (122 aa).

It belongs to the universal ribosomal protein uL14 family. In terms of assembly, part of the 50S ribosomal subunit. Forms a cluster with proteins L3 and L19. In the 70S ribosome, L14 and L19 interact and together make contacts with the 16S rRNA in bridges B5 and B8.

In terms of biological role, binds to 23S rRNA. Forms part of two intersubunit bridges in the 70S ribosome. This Heliobacterium modesticaldum (strain ATCC 51547 / Ice1) protein is Large ribosomal subunit protein uL14.